The sequence spans 198 residues: Thymidine kinase (198 aa).

ATP-binding positions include 9–16 (GTMNSGKS) and 85–88 (DEAQ). Glu86 (proton acceptor) is an active-site residue. Zn(2+) is bound by residues Cys143, Cys146, Cys180, and His183.

The protein belongs to the thymidine kinase family. As to quaternary structure, homotetramer.

It localises to the cytoplasm. The enzyme catalyses thymidine + ATP = dTMP + ADP + H(+). This is Thymidine kinase from Streptococcus thermophilus (strain ATCC BAA-250 / LMG 18311).